The following is a 150-amino-acid chain: Protein adenylyltransferase MntA (150 aa).

The GSX(10)DXD motif signature appears at glycine 32–aspartate 46. Catalysis depends on residues aspartate 44 and aspartate 46. Residues aspartate 44, aspartate 46, and aspartate 86 each contribute to the Mg(2+) site.

It belongs to the MntA antitoxin family. Forms a complex with HepT, probably MntA(1):HepT(2) in vivo; can only be purified when both 'Arg-102' and 'Tyr-109' (or 'His-107' and 'Tyr-109') of HepThave been mutated. The fully di-AMPylated HepT homodimer is not found in a complex with MntA. Requires Mg(2+) as cofactor.

It carries out the reaction L-tyrosyl-[protein] + ATP = O-(5'-adenylyl)-L-tyrosyl-[protein] + diphosphate. The enzyme catalyses O-(5'-adenylyl)-L-tyrosyl-[protein] + ATP = O-[5'-(adenylyl-(5'-&gt;3')-adenylyl)]-L-tyrosyl-[protein] + diphosphate. Functionally, antitoxin component of a type VII toxin-antitoxin (TA) system. Upon cloning in E.coli neutralizes the effect of cognate toxin HepT. Neutralization is mostly due to di-AMPylation of toxin by this enzyme. Successively di-AMPylates HepT on 'Tyr-109'. In vitro will use ATP, dATP, GTP, dGTP, TTP or UTP to generate a mono-modified protein, but requires a purine nucleotide for the second modification reaction (ATP, dATP or GTP). This Aphanizomenon flos-aquae (strain 2012/KM1/D3) protein is Protein adenylyltransferase MntA.